The following is a 390-amino-acid chain: MTGDVPDRIKVLWFLPTHGDSRYLGTAEGGRSVDLPYLTQVAKAADTLGYYGVLLPTGRSCEDSWVIASALVPLTERLRFLVAVRPGLQSPTLAARMTATLDRISNGRLLINVVTGGDPLENKGDGIFLSHAERYEVTQEFLRIYKRVLSGETVEHQGKHLHIEDGRLLFPPVQTPYPPLYFGGSSDAGSTVAAQEIDKYLTWGEPPADVERKLDAVRELAEKAGRKLSFGIRLHVIARETTEEAWAAADRLISRLDDATIASAQKVFARMDSVGQARMSALHGGDRAKLEIAPNLWAGVGLVRGGAGTALVGDPDTIAERIDEYRRLGIDTFILSGYPHLEEAYRFGELVLPKLPTDHPVKATGSSVNTGPFGETIAGDHRPKSLASAS.

The disordered stretch occupies residues 364 to 390 (TGSSVNTGPFGETIAGDHRPKSLASAS).

This sequence belongs to the SsuD family.

The catalysed reaction is an alkanesulfonate + FMNH2 + O2 = an aldehyde + FMN + sulfite + H2O + 2 H(+). Catalyzes the desulfonation of aliphatic sulfonates. In Mesorhizobium japonicum (strain LMG 29417 / CECT 9101 / MAFF 303099) (Mesorhizobium loti (strain MAFF 303099)), this protein is Alkanesulfonate monooxygenase 1 (ssuD1).